A 297-amino-acid polypeptide reads, in one-letter code: Formylmethanofuran--tetrahydromethanopterin formyltransferase (297 aa).

Belongs to the FTR family. As to quaternary structure, homotetramer.

The protein resides in the cytoplasm. The enzyme catalyses N-formylmethanofuran + 5,6,7,8-tetrahydromethanopterin + H(+) = N(5)-formyl-5,6,7,8-tetrahydromethanopterin + methanofuran. It participates in one-carbon metabolism; methanogenesis from CO(2); 5,10-methenyl-5,6,7,8-tetrahydromethanopterin from CO(2): step 2/3. Its function is as follows. Catalyzes the reversible transfer of a formyl group from formylmethanofuran (formyl-MFR) to tetrahydromethanopterin (H(4)MPT) to produce 5-formyl tetrahydromethanopterin (5-formyl-H(4)MPT) and methanofuran (MFR). This Methanothermus fervidus (strain ATCC 43054 / DSM 2088 / JCM 10308 / V24 S) protein is Formylmethanofuran--tetrahydromethanopterin formyltransferase.